Consider the following 307-residue polypeptide: MTVTINKSSVPHKVDFATPLSDVICHIKEDGAVIVRGFMDVETIQKLQEEVDTAVEKGSFGPRYQEYNEEAGEIPKHEIYKRGEGKKTKHMKNLALTSETFRNDVLNHKWMHAVCEQIYGEEFGDYWMNCAHILHLEPGEKAQFFHRDTGVYRVSDFRRRLNDPEFMINFLVSLTEFREDNGATQLIPGSHKWDAAHPPTFYGSDEAVPAILEPGDAVVYLGSLFHGAGENRSLDYRRGMIVSMHPAHFTPMESHFHLPKEIVESMTPLAQQMVGWRTMNNQNKIPIWQAGDDKIEDVLRLQHKEVY.

3 residues coordinate Fe cation: histidine 146, aspartate 148, and histidine 226.

Belongs to the PhyH family. In terms of assembly, homodimer. Fe cation serves as cofactor.

It carries out the reaction verruculide A + 2-oxoglutarate + O2 = chrodrimanin T + succinate + CO2. The catalysed reaction is chrodrimanin E + 2-oxoglutarate + O2 = chrodrimanin A + succinate + CO2. Its pathway is secondary metabolite biosynthesis; terpenoid biosynthesis. Its function is as follows. Dioxygenase; part of the gene cluster that mediates the biosynthesis of chrodrimanin B, a meroterpenoid that acts as a potent blocker of insect GABA-gated chloride channels. The first step of the pathway is the biosynthesis of 6-hydroxymellein by the polyketide synthase cdmE. The prenyltransferase cdmH acts as a 6-hydroxymellein 5-farnesyltransferase and produces the hydrophobic metabolite verruculide C. The FAD-dependent monooxygenase cdmI further converts verruculide C into verruculide B. The terpene cyclase cdmG then produced the pentacyclic molecule 3-hydroxypentacecilide A, the backbone structure of chrodrimanin B, via folding the farnesyl moiety of the substrate into the chair-boat conformation. The short-chain dehydrogenase/reductase cdmF functions as the 3-OH dehydrogenase that oxidizes the C-3 hydroxyl group of 3-hydroxypentacecilide A and produces chrodrimanin C, the dehydrogenated product of 3-hydroxypentacecilide A. The cytochrome P450 monooxygenase cdmJ then accepts both 3-hydroxypentacecilide A and chrodrimanin C and functions as a C-7-beta-hydroxylase to produce respectively chrodrimanin H and chrodrimanin F. The dioxygenase cdmA accepts chrodrimanin H to afford chrodrimanin E, which is further transformed to chrodrimanin A by the dioxygenase cdmD. CdmA can also accept chrodrimanin C as substrate to convert it into verruculide A, which is further converted into chrodrimanin T by cdmD. The last step of the biosynthesis is proposed to be performed by the acetyltransferase cdmC which acetylates chrodrimanin A to yield chrodrimanin B. The pathway may also lead to the production of additional shunt products, including chrodrimanins T and U. In Talaromyces verruculosus (Penicillium verruculosum), this protein is Dioxygenase cdmD.